A 256-amino-acid polypeptide reads, in one-letter code: Triosephosphate isomerase (256 aa).

10 to 12 (NWK) provides a ligand contact to substrate. His-97 serves as the catalytic Electrophile. Glu-169 acts as the Proton acceptor in catalysis. Substrate-binding positions include Gly-175, Ser-214, and 235–236 (GG).

Belongs to the triosephosphate isomerase family. Homodimer.

Its subcellular location is the cytoplasm. It catalyses the reaction D-glyceraldehyde 3-phosphate = dihydroxyacetone phosphate. It functions in the pathway carbohydrate biosynthesis; gluconeogenesis. The protein operates within carbohydrate degradation; glycolysis; D-glyceraldehyde 3-phosphate from glycerone phosphate: step 1/1. Functionally, involved in the gluconeogenesis. Catalyzes stereospecifically the conversion of dihydroxyacetone phosphate (DHAP) to D-glyceraldehyde-3-phosphate (G3P). In Actinobacillus pleuropneumoniae serotype 7 (strain AP76), this protein is Triosephosphate isomerase.